Consider the following 223-residue polypeptide: Cell division protein SepF (223 aa).

The tract at residues 19 to 81 (YDDEYYDDRG…YPPPGGYRGG (63 aa)) is disordered. The segment covering 36-69 (PRFEDDYGRYEGRDFEDPRRDPRAGMRADLRGEP) has biased composition (basic and acidic residues).

Belongs to the SepF family. Homodimer. Interacts with FtsZ.

It localises to the cytoplasm. Cell division protein that is part of the divisome complex and is recruited early to the Z-ring. Probably stimulates Z-ring formation, perhaps through the cross-linking of FtsZ protofilaments. Its function overlaps with FtsA. The protein is Cell division protein SepF of Mycobacterium ulcerans (strain Agy99).